The following is a 330-amino-acid chain: Biotin synthase (330 aa).

A Radical SAM core domain is found at 42–268 (YYGRKVKLNM…INPSKEIRIA (227 aa)). Residues C60, C64, and C67 each contribute to the [4Fe-4S] cluster site. Positions 103, 136, 196, and 266 each coordinate [2Fe-2S] cluster.

Belongs to the radical SAM superfamily. Biotin synthase family. As to quaternary structure, homodimer. Requires [4Fe-4S] cluster as cofactor. It depends on [2Fe-2S] cluster as a cofactor.

The enzyme catalyses (4R,5S)-dethiobiotin + (sulfur carrier)-SH + 2 reduced [2Fe-2S]-[ferredoxin] + 2 S-adenosyl-L-methionine = (sulfur carrier)-H + biotin + 2 5'-deoxyadenosine + 2 L-methionine + 2 oxidized [2Fe-2S]-[ferredoxin]. It functions in the pathway cofactor biosynthesis; biotin biosynthesis; biotin from 7,8-diaminononanoate: step 2/2. Its function is as follows. Catalyzes the conversion of dethiobiotin (DTB) to biotin by the insertion of a sulfur atom into dethiobiotin via a radical-based mechanism. This Macrococcus caseolyticus (strain JCSC5402) (Macrococcoides caseolyticum) protein is Biotin synthase.